A 175-amino-acid chain; its full sequence is NADH-ubiquinone oxidoreductase chain 6 (175 aa).

The next 5 helical transmembrane spans lie at 1–21 (MMTY…VGFS), 27–47 (VYGG…VMNF), 49–69 (GSFL…VVFG), 88–108 (VVLG…LYVL), and 149–169 (YGVW…VVIM).

This sequence belongs to the complex I subunit 6 family. In terms of assembly, core subunit of respiratory chain NADH dehydrogenase (Complex I) which is composed of 45 different subunits.

It localises to the mitochondrion inner membrane. It carries out the reaction a ubiquinone + NADH + 5 H(+)(in) = a ubiquinol + NAD(+) + 4 H(+)(out). Functionally, core subunit of the mitochondrial membrane respiratory chain NADH dehydrogenase (Complex I) which catalyzes electron transfer from NADH through the respiratory chain, using ubiquinone as an electron acceptor. Essential for the catalytic activity and assembly of complex I. This Pteropus dasymallus (Ryukyu flying fox) protein is NADH-ubiquinone oxidoreductase chain 6 (MT-ND6).